A 207-amino-acid polypeptide reads, in one-letter code: SPRY domain-containing protein 4 (207 aa).

The B30.2/SPRY domain occupies 12–206 (CRWGAKRLGV…THSGLEVPEG (195 aa)). An N6-acetyllysine mark is found at Lys53 and Lys130. Position 139 is an N6-succinyllysine (Lys139).

The sequence is that of SPRY domain-containing protein 4 (SPRYD4) from Homo sapiens (Human).